Here is a 1087-residue protein sequence, read N- to C-terminus: Fanconi-associated nuclease 1 homolog (1087 aa).

6 disordered regions span residues 1 to 79 (MKSN…TPIK), 104 to 154 (FQKA…PNNL), 169 to 202 (EFLLSQPTTPPPSNTTTTTTTTSSSSPSSSNNIT), 459 to 486 (TQNSSGSSNNNNNNNNNNNNNNNNNNNI), 816 to 835 (ITSDDELFPPGQSYKIEKEN), and 842 to 871 (SVKKEEEQEEEEEEEEEGQGQEEEEEEEEI). The segment covering 41 to 79 (TTTPPKTPTQPIRFTQNNNKENDKSNNNNNNNNTITPIK) has biased composition (low complexity). Residues 104–115 (FQKASTPSSPQI) show a composition bias toward polar residues. Composition is skewed to low complexity over residues 118–154 (KLPQQENQQQIPNTQQQQIKQLQQQQQQQQQESPNNL), 182–202 (NTTTTTTTTSSSSPSSSNNIT), and 467–485 (NNNNNNNNNNNNNNNNNNN). Coiled coils occupy residues 419 to 490 (WKSK…KEYD) and 830 to 874 (KIEK…IIEI). A compositionally biased stretch (acidic residues) spans 848–871 (EQEEEEEEEEEGQGQEEEEEEEEI). Mn(2+) is bound by residues Glu899, Asp1023, Glu1051, and Val1052. The VRR-NUC domain maps to 961–1083 (DDLLILLNQS…GCDVEVCLVK (123 aa)).

The protein belongs to the FAN1 family. The cofactor is Mn(2+). Mg(2+) is required as a cofactor.

It catalyses the reaction Hydrolytically removes 5'-nucleotides successively from the 3'-hydroxy termini of 3'-hydroxy-terminated oligonucleotides.. Its function is as follows. Nuclease required for the repair of DNA interstrand cross-links (ICL). Acts as a 5'-3' exonuclease that anchors at a cut end of DNA and cleaves DNA successively at every third nucleotide, allowing to excise an ICL from one strand through flanking incisions. In Dictyostelium discoideum (Social amoeba), this protein is Fanconi-associated nuclease 1 homolog (mtmr15).